The sequence spans 213 residues: Na(+)-translocating NADH-quinone reductase subunit D (213 aa).

6 helical membrane passes run 22-42, 43-63, 77-97, 101-121, 131-151, and 183-203; these read LIAI…TTAL, TMGF…SLLR, IIIS…FFTI, LSVF…AESM, FLDG…ISII, and LGLM…IWIV.

The protein belongs to the NqrDE/RnfAE family. In terms of assembly, composed of six subunits; NqrA, NqrB, NqrC, NqrD, NqrE and NqrF.

It localises to the cell inner membrane. It catalyses the reaction a ubiquinone + n Na(+)(in) + NADH + H(+) = a ubiquinol + n Na(+)(out) + NAD(+). Functionally, NQR complex catalyzes the reduction of ubiquinone-1 to ubiquinol by two successive reactions, coupled with the transport of Na(+) ions from the cytoplasm to the periplasm. NqrA to NqrE are probably involved in the second step, the conversion of ubisemiquinone to ubiquinol. The protein is Na(+)-translocating NADH-quinone reductase subunit D of Chlamydia trachomatis serovar L2 (strain ATCC VR-902B / DSM 19102 / 434/Bu).